We begin with the raw amino-acid sequence, 126 residues long: Small ribosomal subunit protein uS13 (126 aa).

The interval 96-126 is disordered; it reads PVRGQRTRTNARTRRGSRRTVAGKKKPAAKK. Residues 100 to 126 are compositionally biased toward basic residues; that stretch reads QRTRTNARTRRGSRRTVAGKKKPAAKK.

It belongs to the universal ribosomal protein uS13 family. As to quaternary structure, part of the 30S ribosomal subunit. Forms a loose heterodimer with protein S19. Forms two bridges to the 50S subunit in the 70S ribosome.

Located at the top of the head of the 30S subunit, it contacts several helices of the 16S rRNA. In the 70S ribosome it contacts the 23S rRNA (bridge B1a) and protein L5 of the 50S subunit (bridge B1b), connecting the 2 subunits; these bridges are implicated in subunit movement. Contacts the tRNAs in the A and P-sites. The polypeptide is Small ribosomal subunit protein uS13 (Thermosynechococcus vestitus (strain NIES-2133 / IAM M-273 / BP-1)).